A 743-amino-acid chain; its full sequence is NAD(P)H-quinone oxidoreductase subunit 5, chloroplastic (743 aa).

16 helical membrane passes run 9–29 (WIIPLVPLPVPMLIGVGLLFF), 40–60 (WAFISILLLSIVMIFSIDLSI), 89–109 (IDPLTSIMSILITTVGILVLI), 125–145 (FAYMSFFNASMLGLVTSSNFI), 147–167 (IYIFWELVGMCSYLLIGFWFT), 185–205 (GDFGLLLGILGLYWLTGSFEF), 219–239 (NEVNLLFVTLCAFLLFAGPVA), 258–278 (TPISALIHAATMVAAGIFLVA), 280–300 (LLPLFIVIPYAMNLISLIGII), 327–347 (LGYMMLALGMGSYRAALFHLI), 354–374 (ALLFLGSGSIIHSMEAIVGYF), 396–416 (TAFLVGTLSLCGIPPLACFWS), 425–445 (WLYSPIFATIAFFTAGLTAFY), 546–566 (ILFVMLVLVLFPLFVGAIGIP), 607–627 (LSVSITYFGILLAYFLYKPFY), and 721–741 (FYLLLYLFSLLFFLIFLFFFF).

The protein belongs to the complex I subunit 5 family. As to quaternary structure, NDH is composed of at least 16 different subunits, 5 of which are encoded in the nucleus.

Its subcellular location is the plastid. It is found in the chloroplast thylakoid membrane. The enzyme catalyses a plastoquinone + NADH + (n+1) H(+)(in) = a plastoquinol + NAD(+) + n H(+)(out). The catalysed reaction is a plastoquinone + NADPH + (n+1) H(+)(in) = a plastoquinol + NADP(+) + n H(+)(out). NDH shuttles electrons from NAD(P)H:plastoquinone, via FMN and iron-sulfur (Fe-S) centers, to quinones in the photosynthetic chain and possibly in a chloroplast respiratory chain. The immediate electron acceptor for the enzyme in this species is believed to be plastoquinone. Couples the redox reaction to proton translocation, and thus conserves the redox energy in a proton gradient. This is NAD(P)H-quinone oxidoreductase subunit 5, chloroplastic (ndhF) from Citrus sinensis (Sweet orange).